Here is a 488-residue protein sequence, read N- to C-terminus: ATP synthase subunit beta (488 aa).

Residue 164-171 (GGAGVGKT) coordinates ATP.

The protein belongs to the ATPase alpha/beta chains family. As to quaternary structure, F-type ATPases have 2 components, CF(1) - the catalytic core - and CF(0) - the membrane proton channel. CF(1) has five subunits: alpha(3), beta(3), gamma(1), delta(1), epsilon(1). CF(0) has four main subunits: a(1), b(1), b'(1) and c(9-12).

Its subcellular location is the cellular thylakoid membrane. It catalyses the reaction ATP + H2O + 4 H(+)(in) = ADP + phosphate + 5 H(+)(out). Functionally, produces ATP from ADP in the presence of a proton gradient across the membrane. The catalytic sites are hosted primarily by the beta subunits. This is ATP synthase subunit beta from Prochlorococcus marinus (strain NATL1A).